A 240-amino-acid polypeptide reads, in one-letter code: MVEMHEGAGLPEDGEFLLLDKPLDWTSFDVVAKVRNAYKRGGLKRKVGHSGTLDPKATGLLILATGKKTRELSTLEGLDKVYDAVIRLGARTLSHDSESEEYGLRDVTHLDEGAVKRAASELEGKRMQQAPMHSATWHKGKRLYELARKGTVVTDRKSKEIVVHSFDVLRVELPLAYCRIHVSKGAYIRVLADELGEALGVGGYLAGLRRIAIGSYQVESAMRVEDAVARVLGQMQVTDQ.

Asp-54 (nucleophile) is an active-site residue.

It belongs to the pseudouridine synthase TruB family. Type 1 subfamily.

It catalyses the reaction uridine(55) in tRNA = pseudouridine(55) in tRNA. In terms of biological role, responsible for synthesis of pseudouridine from uracil-55 in the psi GC loop of transfer RNAs. The sequence is that of tRNA pseudouridine synthase B from Chlorobium phaeovibrioides (strain DSM 265 / 1930) (Prosthecochloris vibrioformis (strain DSM 265)).